The primary structure comprises 261 residues: uncharacterized protein (261 aa).

Belongs to the FrhB family.

This is an uncharacterized protein from Methanocaldococcus jannaschii (strain ATCC 43067 / DSM 2661 / JAL-1 / JCM 10045 / NBRC 100440) (Methanococcus jannaschii).